We begin with the raw amino-acid sequence, 748 residues long: Long-chain-alcohol oxidase FAO4B (748 aa).

Residues Met1 to Lys18 are compositionally biased toward basic residues. Residues Met1 to His25 are disordered. A run of 2 helical transmembrane segments spans residues Ile89–Leu109 and Phe140–Phe160. Cys238 to Ala253 serves as a coordination point for FAD. The active-site Proton acceptor is the His679.

Belongs to the GMC oxidoreductase family.

It localises to the membrane. The catalysed reaction is a long-chain primary fatty alcohol + O2 = a long-chain fatty aldehyde + H2O2. In terms of biological role, long-chain fatty alcohol oxidase involved in the omega-oxidation pathway of lipid degradation. The polypeptide is Long-chain-alcohol oxidase FAO4B (FAO4B) (Arabidopsis thaliana (Mouse-ear cress)).